Reading from the N-terminus, the 161-residue chain is Phosphopantetheine adenylyltransferase (161 aa).

Residue serine 9 coordinates substrate. Residues 9–10 (SF) and histidine 17 contribute to the ATP site. Substrate-binding residues include lysine 41, leucine 73, and arginine 87. Residues 88 to 90 (GLR), glutamate 98, and 123 to 129 (YTFISSS) contribute to the ATP site.

It belongs to the bacterial CoaD family. Homohexamer. It depends on Mg(2+) as a cofactor.

It localises to the cytoplasm. It carries out the reaction (R)-4'-phosphopantetheine + ATP + H(+) = 3'-dephospho-CoA + diphosphate. It participates in cofactor biosynthesis; coenzyme A biosynthesis; CoA from (R)-pantothenate: step 4/5. In terms of biological role, reversibly transfers an adenylyl group from ATP to 4'-phosphopantetheine, yielding dephospho-CoA (dPCoA) and pyrophosphate. In Syntrophomonas wolfei subsp. wolfei (strain DSM 2245B / Goettingen), this protein is Phosphopantetheine adenylyltransferase.